Consider the following 364-residue polypeptide: Rhomboid domain-containing protein 2 (364 aa).

The next 5 helical transmembrane spans lie at 11 to 31, 63 to 83, 100 to 120, 158 to 178, and 184 to 204; these read WCLCPEVPSATFFTALLSLLV, LVTYIFVYENPISLLCGAIII, CFFTVIFAIFSAIIFLSFEAV, FGMVVPSVLVPWLLLGASWLI, and LSNVCGLSIGLAYGLTYCYSI. 2 disordered regions span residues 242–282 and 317–364; these read AQSR…KLAS and SSVY…VPMP. 2 stretches are compositionally biased toward polar residues: residues 267–276 and 317–329; these read HPVSQTQHAS and SSVYPASAGTSLG.

It belongs to the peptidase S54 family.

Its subcellular location is the golgi apparatus. It is found in the cis-Golgi network membrane. The chain is Rhomboid domain-containing protein 2 (RHBDD2) from Homo sapiens (Human).